We begin with the raw amino-acid sequence, 107 residues long: Quaternary ammonium compound-resistance protein QacG (107 aa).

Transmembrane regions (helical) follow at residues 1 to 21 (MHYLYLFISIATEIIGTSFLK), 26 to 46 (FTKLWPTLGTLLSFGICFYFL), 57 to 77 (ITYATWAGLGLVLTTIISVIV), and 84 to 104 (LISIISIGLIVIGVVLLNVFG).

This sequence belongs to the drug/metabolite transporter (DMT) superfamily. Small multidrug resistance (SMR) (TC 2.A.7.1) family.

Its subcellular location is the cell membrane. In terms of biological role, multidrug exporter. Is implicated for the resistance to bacteriocidal quaternary ammonium compounds. In Staphylococcus sp. (strain ST94), this protein is Quaternary ammonium compound-resistance protein QacG (qacG).